The primary structure comprises 438 residues: tRNA modification GTPase MnmE (438 aa).

The (6S)-5-formyl-5,6,7,8-tetrahydrofolate site is built by Arg19, Glu76, and Lys115. The 153-residue stretch at 211–363 (GYKVAIIGRP…LSKELESYLN (153 aa)) folds into the TrmE-type G domain. Residues 221 to 226 (NVGKSS), 240 to 246 (SETAGTT), and 265 to 268 (DTAG) each bind GTP. Mg(2+) contacts are provided by Ser225 and Thr246. Lys438 contacts (6S)-5-formyl-5,6,7,8-tetrahydrofolate.

Belongs to the TRAFAC class TrmE-Era-EngA-EngB-Septin-like GTPase superfamily. TrmE GTPase family. As to quaternary structure, homodimer. Heterotetramer of two MnmE and two MnmG subunits. K(+) serves as cofactor.

It is found in the cytoplasm. Its function is as follows. Exhibits a very high intrinsic GTPase hydrolysis rate. Involved in the addition of a carboxymethylaminomethyl (cmnm) group at the wobble position (U34) of certain tRNAs, forming tRNA-cmnm(5)s(2)U34. This Campylobacter fetus subsp. fetus (strain 82-40) protein is tRNA modification GTPase MnmE.